The following is a 748-amino-acid chain: Catalase-peroxidase (748 aa).

Positions 91-236 (WHSAGTYRVG…LAAVQMGLIY (146 aa)) form a cross-link, tryptophyl-tyrosyl-methioninium (Trp-Tyr) (with M-262). His-92 (proton acceptor) is an active-site residue. The interval 201 to 223 (AQPVADKAGHGKEHGRTDGGRNL) is disordered. Positions 207–221 (KAGHGKEHGRTDGGR) are enriched in basic and acidic residues. Residues 236-262 (YVNPEGPDGNPDPQASAHDIRETFARM) constitute a cross-link (tryptophyl-tyrosyl-methioninium (Tyr-Met) (with W-91)). His-277 contributes to the heme b binding site.

It belongs to the peroxidase family. Peroxidase/catalase subfamily. As to quaternary structure, homodimer or homotetramer. The cofactor is heme b. In terms of processing, formation of the three residue Trp-Tyr-Met cross-link is important for the catalase, but not the peroxidase activity of the enzyme.

The enzyme catalyses H2O2 + AH2 = A + 2 H2O. The catalysed reaction is 2 H2O2 = O2 + 2 H2O. Functionally, bifunctional enzyme with both catalase and broad-spectrum peroxidase activity. This chain is Catalase-peroxidase, found in Bordetella avium (strain 197N).